The following is a 538-amino-acid chain: D-alanyl-D-alanine carboxypeptidase (538 aa).

Positions 1–21 (MKQSSPEPLRPRRTGGRGGAR) are disordered. The N-terminal stretch at 1-49 (MKQSSPEPLRPRRTGGRGGARRAAALVTIPLLPMTLLGASPALADASGA) is a signal peptide. The active-site Acyl-ester intermediate is the Ser98. Lys101 functions as the Proton acceptor in the catalytic mechanism. An absent in class-A beta-lactamases region spans residues 146 to 319 (TLSAEDLDAM…KGDVGLGGVP (174 aa)). Ser347 is a catalytic residue. A substrate-binding site is contributed by Lys459. Residues 516–538 (GARMMRGPVQGSGELECSWVQAC) constitute a propeptide, removed in mature form.

Belongs to the peptidase S13 family.

The protein localises to the secreted. The catalysed reaction is Preferential cleavage: (Ac)2-L-Lys-D-Ala-|-D-Ala. Also transpeptidation of peptidyl-alanyl moieties that are N-acyl substituents of D-alanine.. Its pathway is cell wall biogenesis; peptidoglycan biosynthesis. With respect to regulation, inhibited by benzylpenicillin, cephaloridine, ampicillin and cetiofur. Functionally, removes C-terminal D-alanyl residues from sugar-peptide cell wall precursors. In Actinomadura sp. (strain R39), this protein is D-alanyl-D-alanine carboxypeptidase (dac).